Consider the following 273-residue polypeptide: Ribosomal RNA small subunit methyltransferase A (273 aa).

S-adenosyl-L-methionine-binding residues include Asn18, Leu20, Gly45, Glu66, Asp91, and Asn113.

It belongs to the class I-like SAM-binding methyltransferase superfamily. rRNA adenine N(6)-methyltransferase family. RsmA subfamily.

It is found in the cytoplasm. It carries out the reaction adenosine(1518)/adenosine(1519) in 16S rRNA + 4 S-adenosyl-L-methionine = N(6)-dimethyladenosine(1518)/N(6)-dimethyladenosine(1519) in 16S rRNA + 4 S-adenosyl-L-homocysteine + 4 H(+). Its function is as follows. Specifically dimethylates two adjacent adenosines (A1518 and A1519) in the loop of a conserved hairpin near the 3'-end of 16S rRNA in the 30S particle. May play a critical role in biogenesis of 30S subunits. The polypeptide is Ribosomal RNA small subunit methyltransferase A (Enterobacter sp. (strain 638)).